The sequence spans 603 residues: Geraniol synthase, chloroplastic (603 aa).

The transit peptide at methionine 1 to proline 50 directs the protein to the chloroplast. (2E)-geranyl diphosphate is bound by residues arginine 301, aspartate 338, aspartate 342, arginine 479, and aspartate 482. Residues aspartate 338 and aspartate 342 each coordinate Mg(2+). Positions aspartate 338 to aspartate 342 match the DDXXD motif motif. Aspartate 482, threonine 486, and glutamate 490 together coordinate Mg(2+).

It belongs to the terpene synthase family. Tpsb subfamily. In terms of assembly, homodimer. Mg(2+) serves as cofactor. It depends on Mn(2+) as a cofactor. In terms of tissue distribution, expressed in the oil cells of the leaves.

The protein localises to the plastid. It localises to the chloroplast. The enzyme catalyses (2E)-geranyl diphosphate + H2O = (2E)-geraniol + diphosphate. The protein operates within secondary metabolite biosynthesis; terpenoid biosynthesis. In terms of biological role, monoterpene synthase that catalyzes the formation of geraniol from geranyl diphosphate. The chain is Geraniol synthase, chloroplastic (GerS) from Cinnamomum tenuipile (Alseodaphne mollis).